The following is a 122-amino-acid chain: Small ribosomal subunit protein uS13 (122 aa).

The tract at residues 93 to 122 is disordered; it reads RRGLPVRGQNTKTNARTRKGPKRTAGGKKK. Basic residues predominate over residues 107 to 122; the sequence is ARTRKGPKRTAGGKKK.

Belongs to the universal ribosomal protein uS13 family. In terms of assembly, part of the 30S ribosomal subunit. Forms a loose heterodimer with protein S19. Forms two bridges to the 50S subunit in the 70S ribosome.

Located at the top of the head of the 30S subunit, it contacts several helices of the 16S rRNA. In the 70S ribosome it contacts the 23S rRNA (bridge B1a) and protein L5 of the 50S subunit (bridge B1b), connecting the 2 subunits; these bridges are implicated in subunit movement. Contacts the tRNAs in the A and P-sites. In Syntrophomonas wolfei subsp. wolfei (strain DSM 2245B / Goettingen), this protein is Small ribosomal subunit protein uS13.